The following is a 325-amino-acid chain: Elongation factor P--(R)-beta-lysine ligase (325 aa).

76-78 provides a ligand contact to substrate; sequence SPE. ATP contacts are provided by residues 100–102 and asparagine 109; that span reads RNE. Tyrosine 118 provides a ligand contact to substrate. ATP is bound at residue 244–245; that stretch reads EL. Substrate is bound at residue glutamate 251. Glycine 300 contributes to the ATP binding site.

This sequence belongs to the class-II aminoacyl-tRNA synthetase family. EpmA subfamily. In terms of assembly, homodimer.

It carries out the reaction D-beta-lysine + L-lysyl-[protein] + ATP = N(6)-((3R)-3,6-diaminohexanoyl)-L-lysyl-[protein] + AMP + diphosphate + H(+). Its function is as follows. With EpmB is involved in the beta-lysylation step of the post-translational modification of translation elongation factor P (EF-P) on 'Lys-34'. Catalyzes the ATP-dependent activation of (R)-beta-lysine produced by EpmB, forming a lysyl-adenylate, from which the beta-lysyl moiety is then transferred to the epsilon-amino group of EF-P 'Lys-34'. This Salmonella dublin (strain CT_02021853) protein is Elongation factor P--(R)-beta-lysine ligase.